Consider the following 345-residue polypeptide: Papain (345 aa).

Positions 1–18 are cleaved as a signal peptide; the sequence is MAMIPSISKLLFVAICLF. Positions 19–133 are cleaved as a propeptide — activation peptide; that stretch reads VYMGLSFGDF…EEVLNDGDVN (115 aa). 3 cysteine pairs are disulfide-bonded: cysteine 155–cysteine 196, cysteine 189–cysteine 228, and cysteine 286–cysteine 333. Residue cysteine 158 is part of the active site. Cysteine 158 contacts E64. Cysteine 158 is a leupeptin binding site. Catalysis depends on residues histidine 292 and asparagine 308.

It belongs to the peptidase C1 family.

It catalyses the reaction Hydrolysis of proteins with broad specificity for peptide bonds, but preference for an amino acid bearing a large hydrophobic side chain at the P2 position. Does not accept Val in P1'.. Repressed by the active-site-directed cysteine protease inhibitor E64 (L-trans-epoxysuccinyl-leucylamide-(4-guanido)-butane) produced by Aspergillus japonicus. Inhibited by the inhibitor of cysteine proteases from Trypanosoma brucei (TbICP, rhodesain) and Colocasia esculenta cv. Kaohsiung no. 1 (CeCPI, tarocystatin). Repressed by leupeptin, a peptidic cysteine, serine and threonine protease inhibitor. Its function is as follows. Cysteine proteinase with a high level of diversity in substrate specificity, an amino acid bearing a large hydrophobic side chain at the P2 position is preferred. In Carica papaya (Papaya), this protein is Papain.